Here is a 513-residue protein sequence, read N- to C-terminus: Melianol synthase CYP71BQ4 (513 aa).

Residues 10–30 (MLHLPSLPVLLSFLLFLLMLI) form a helical membrane-spanning segment. A heme-binding site is contributed by Cys451.

Belongs to the cytochrome P450 family. Heme serves as cofactor. As to expression, accumulates in mature fruits and in juice vesicles.

The protein localises to the membrane. It catalyses the reaction dihydroniloticin + 2 reduced [NADPH--hemoprotein reductase] + 2 O2 = melianol + 2 oxidized [NADPH--hemoprotein reductase] + 3 H2O + 2 H(+). It participates in secondary metabolite biosynthesis; terpenoid biosynthesis. Its function is as follows. Monooxygenase involved in the biosynthesis of limonoids triterpene natural products such as limonin, a compound with insecticidal activity responsible for the bitter taste in citrus. Catalyzes the conversion of dihydroniloticin to the protolimonoid melianol. This is Melianol synthase CYP71BQ4 from Citrus sinensis (Sweet orange).